Here is a 294-residue protein sequence, read N- to C-terminus: IVFRAAQERSDIEIVAINDLLDADYMAYMLKYDSTHGRFNGTVEVKDGHLIVNGKKIRVTAERDPANLKWDEVGVDVVAEATGLFLTDETARKHITAGAKKVVLTGPSKDNTPMFVKGANFDKYEGQDIVSNASCTTNCLAPLAKVINDNFGIIEGLMTTVHATTATQKTVDGPSHKDWRGGRGASQNIIPSSTGAAKAVGKVLPELNGKLTGMAFRVPTPNVSVVDLTVRLEKAASYEEIKKAIKAASEGPMKGVLGYTEDDVVSTDFNGEVCTSVFDAKAGIALNDNFVKLV.

NAD(+)-binding residues include aspartate 19, arginine 63, and threonine 105. D-glyceraldehyde 3-phosphate contacts are provided by residues 134–136 (SCT) and threonine 165. Catalysis depends on cysteine 135, which acts as the Nucleophile. The segment at 169 to 188 (KTVDGPSHKDWRGGRGASQN) is disordered. D-glyceraldehyde 3-phosphate-binding positions include 194–195 (TG) and arginine 217.

This sequence belongs to the glyceraldehyde-3-phosphate dehydrogenase family. As to quaternary structure, homotetramer.

It is found in the cytoplasm. It catalyses the reaction D-glyceraldehyde 3-phosphate + phosphate + NAD(+) = (2R)-3-phospho-glyceroyl phosphate + NADH + H(+). It participates in carbohydrate degradation; glycolysis; pyruvate from D-glyceraldehyde 3-phosphate: step 1/5. Its function is as follows. Catalyzes the oxidative phosphorylation of glyceraldehyde 3-phosphate (G3P) to 1,3-bisphosphoglycerate (BPG) using the cofactor NAD. The first reaction step involves the formation of a hemiacetal intermediate between G3P and a cysteine residue, and this hemiacetal intermediate is then oxidized to a thioester, with concomitant reduction of NAD to NADH. The reduced NADH is then exchanged with the second NAD, and the thioester is attacked by a nucleophilic inorganic phosphate to produce BPG. The protein is Glyceraldehyde-3-phosphate dehydrogenase (gap) of Citrobacter freundii.